The sequence spans 620 residues: 1-deoxy-D-xylulose-5-phosphate synthase (620 aa).

Residues histidine 80 and 121–123 (GHS) contribute to the thiamine diphosphate site. Mg(2+) is bound at residue aspartate 152. Thiamine diphosphate-binding positions include 153–154 (GA), asparagine 181, tyrosine 288, and glutamate 370. Asparagine 181 contacts Mg(2+).

Belongs to the transketolase family. DXPS subfamily. As to quaternary structure, homodimer. Requires Mg(2+) as cofactor. The cofactor is thiamine diphosphate.

It carries out the reaction D-glyceraldehyde 3-phosphate + pyruvate + H(+) = 1-deoxy-D-xylulose 5-phosphate + CO2. It participates in metabolic intermediate biosynthesis; 1-deoxy-D-xylulose 5-phosphate biosynthesis; 1-deoxy-D-xylulose 5-phosphate from D-glyceraldehyde 3-phosphate and pyruvate: step 1/1. In terms of biological role, catalyzes the acyloin condensation reaction between C atoms 2 and 3 of pyruvate and glyceraldehyde 3-phosphate to yield 1-deoxy-D-xylulose-5-phosphate (DXP). The protein is 1-deoxy-D-xylulose-5-phosphate synthase of Escherichia coli (strain SMS-3-5 / SECEC).